Reading from the N-terminus, the 151-residue chain is Endoribonuclease YbeY (151 aa).

Zn(2+) contacts are provided by H108, H112, and D118.

Belongs to the endoribonuclease YbeY family. Zn(2+) serves as cofactor.

It localises to the cytoplasm. In terms of biological role, single strand-specific metallo-endoribonuclease involved in late-stage 70S ribosome quality control and in maturation of the 3' terminus of the 16S rRNA. This is Endoribonuclease YbeY from Porphyromonas gingivalis (strain ATCC 33277 / DSM 20709 / CIP 103683 / JCM 12257 / NCTC 11834 / 2561).